A 202-amino-acid polypeptide reads, in one-letter code: Orotate phosphoribosyltransferase (202 aa).

Residues Lys93 and 113–121 (EDIITTGGS) each bind 5-phospho-alpha-D-ribose 1-diphosphate. Residues Thr117 and Arg145 each coordinate orotate.

The protein belongs to the purine/pyrimidine phosphoribosyltransferase family. PyrE subfamily. In terms of assembly, homodimer. Mg(2+) is required as a cofactor.

It carries out the reaction orotidine 5'-phosphate + diphosphate = orotate + 5-phospho-alpha-D-ribose 1-diphosphate. It functions in the pathway pyrimidine metabolism; UMP biosynthesis via de novo pathway; UMP from orotate: step 1/2. Catalyzes the transfer of a ribosyl phosphate group from 5-phosphoribose 1-diphosphate to orotate, leading to the formation of orotidine monophosphate (OMP). The polypeptide is Orotate phosphoribosyltransferase (Campylobacter concisus (strain 13826)).